Here is a 520-residue protein sequence, read N- to C-terminus: Tetratricopeptide repeat protein 6 (520 aa).

TPR repeat units lie at residues 57-90, 101-138, 139-172, 176-209, 210-243, 245-280, 281-314, 320-347, 348-381, 382-415, 416-449, 450-483, and 484-517; these read MTMC…ISHS, ADCL…DKNS, YTAF…DATE, LNTF…SRTN, GSLC…NPCF, DAYV…NPAY, IKAR…DPKN, GRAV…ISTT, AEFL…NPKY, SLAY…DPEN, EYVL…CPFW, AAVY…KPND, and ALVY…EDYA.

This Homo sapiens (Human) protein is Tetratricopeptide repeat protein 6.